Reading from the N-terminus, the 415-residue chain is Methylthioribose-1-phosphate isomerase (415 aa).

Residue D284 is the Proton donor of the active site.

Belongs to the eIF-2B alpha/beta/delta subunits family. MtnA subfamily.

Its subcellular location is the cytoplasm. The protein localises to the nucleus. The catalysed reaction is 5-(methylsulfanyl)-alpha-D-ribose 1-phosphate = 5-(methylsulfanyl)-D-ribulose 1-phosphate. Its pathway is amino-acid biosynthesis; L-methionine biosynthesis via salvage pathway; L-methionine from S-methyl-5-thio-alpha-D-ribose 1-phosphate: step 1/6. Catalyzes the interconversion of methylthioribose-1-phosphate (MTR-1-P) into methylthioribulose-1-phosphate (MTRu-1-P). This Candida glabrata (strain ATCC 2001 / BCRC 20586 / JCM 3761 / NBRC 0622 / NRRL Y-65 / CBS 138) (Yeast) protein is Methylthioribose-1-phosphate isomerase.